Here is a 162-residue protein sequence, read N- to C-terminus: Small ribosomal subunit protein uS12m (162 aa).

The N-terminal 37 residues, 1 to 37 (MIRFAQYARYPVISRLMKPTVISPFQAQAFSSSSVML), are a transit peptide targeting the mitochondrion.

The protein belongs to the universal ribosomal protein uS12 family. Component of the mitochondrial small ribosomal subunit (mt-SSU). Mature yeast 74S mitochondrial ribosomes consist of a small (37S) and a large (54S) subunit. The 37S small subunit contains a 15S ribosomal RNA (15S mt-rRNA) and at least 32 different proteins. The 54S large subunit contains a 21S rRNA (21S mt-rRNA) and at least 45 different proteins. uS12m forms part of the decoding center of the mt-SSU.

It is found in the mitochondrion. In terms of biological role, component of the mitochondrial ribosome (mitoribosome), a dedicated translation machinery responsible for the synthesis of mitochondrial genome-encoded proteins, including at least some of the essential transmembrane subunits of the mitochondrial respiratory chain. The mitoribosomes are attached to the mitochondrial inner membrane and translation products are cotranslationally integrated into the membrane. uS12m is required for respiratory growth. This chain is Small ribosomal subunit protein uS12m, found in Schizosaccharomyces pombe (strain 972 / ATCC 24843) (Fission yeast).